Consider the following 179-residue polypeptide: Pyridoxal 5'-phosphate synthase subunit PdxT (179 aa).

Residue 48-50 (GES) participates in L-glutamine binding. The active-site Nucleophile is the Cys79. Residues Arg101 and 127-128 (IR) each bind L-glutamine. Active-site charge relay system residues include His163 and Glu165.

This sequence belongs to the glutaminase PdxT/SNO family. In terms of assembly, in the presence of PdxS, forms a dodecamer of heterodimers. Only shows activity in the heterodimer.

It catalyses the reaction aldehydo-D-ribose 5-phosphate + D-glyceraldehyde 3-phosphate + L-glutamine = pyridoxal 5'-phosphate + L-glutamate + phosphate + 3 H2O + H(+). The catalysed reaction is L-glutamine + H2O = L-glutamate + NH4(+). Its pathway is cofactor biosynthesis; pyridoxal 5'-phosphate biosynthesis. Functionally, catalyzes the hydrolysis of glutamine to glutamate and ammonia as part of the biosynthesis of pyridoxal 5'-phosphate. The resulting ammonia molecule is channeled to the active site of PdxS. The sequence is that of Pyridoxal 5'-phosphate synthase subunit PdxT from Francisella tularensis subsp. holarctica (strain FTNF002-00 / FTA).